A 141-amino-acid chain; its full sequence is MALERTLSIIKPDAVAKNVIGEIYSRFEKAGLKVVAAKYKQLSRREAEGFYAVHRERPFFNALVEFMISGPVMIQALEGENAVAAHRDLLGATNPKDAAPGTIRADFADSIDANAAHGSDSVENAANEVAYFFAATEVVSR.

ATP contacts are provided by K11, F59, R87, T93, R104, and N114. The Pros-phosphohistidine intermediate role is filled by H117.

Belongs to the NDK family. In terms of assembly, homotetramer. Mg(2+) is required as a cofactor.

Its subcellular location is the cytoplasm. It catalyses the reaction a 2'-deoxyribonucleoside 5'-diphosphate + ATP = a 2'-deoxyribonucleoside 5'-triphosphate + ADP. The enzyme catalyses a ribonucleoside 5'-diphosphate + ATP = a ribonucleoside 5'-triphosphate + ADP. Major role in the synthesis of nucleoside triphosphates other than ATP. The ATP gamma phosphate is transferred to the NDP beta phosphate via a ping-pong mechanism, using a phosphorylated active-site intermediate. This chain is Nucleoside diphosphate kinase, found in Xanthomonas axonopodis pv. citri (strain 306).